The primary structure comprises 526 residues: Probable 1,4-alpha-glucan branching enzyme MT3115 (526 aa).

Glu-205 serves as the catalytic Nucleophile. Substrate-binding residues include Arg-251 and Gly-268. The active-site Proton donor is the Asp-344. Positions 396 and 462 each coordinate substrate.

The protein belongs to the glycosyl hydrolase 57 family.

It carries out the reaction Transfers a segment of a (1-&gt;4)-alpha-D-glucan chain to a primary hydroxy group in a similar glucan chain.. Catalyzes the formation of branch points in alpha-glucans by cleavage of an alpha-1,4 glycosidic bond and subsequent transfer of the cleaved-off oligosaccharide to a new alpha-1,6 position. Is probably involved in the biosynthesis of 6-O-methylglucosyl lipopolysaccharides (MGLP). This is Probable 1,4-alpha-glucan branching enzyme MT3115 from Mycobacterium tuberculosis (strain CDC 1551 / Oshkosh).